The sequence spans 167 residues: Interferon gamma (167 aa).

The first 23 residues, 1-23 (MNYTSFIFAFQLCIILCSSGYYC), serve as a signal peptide directing secretion. The residue at position 24 (Gln24) is a Pyrrolidone carboxylic acid. N-linked (GlcNAc...) asparagine glycans are attached at residues Asn39 and Asn107.

It belongs to the type II (or gamma) interferon family. In terms of assembly, homodimer. Interacts with IFNGR1 (via extracellular domain); this interaction promotes IFNGR1 dimerization. Released primarily from activated T lymphocytes.

It localises to the secreted. Functionally, type II interferon produced by immune cells such as T-cells and NK cells that plays crucial roles in antimicrobial, antiviral, and antitumor responses by activating effector immune cells and enhancing antigen presentation. Primarily signals through the JAK-STAT pathway after interaction with its receptor IFNGR1 to affect gene regulation. Upon IFNG binding, IFNGR1 intracellular domain opens out to allow association of downstream signaling components JAK2, JAK1 and STAT1, leading to STAT1 activation, nuclear translocation and transcription of IFNG-regulated genes. Many of the induced genes are transcription factors such as IRF1 that are able to further drive regulation of a next wave of transcription. Plays a role in class I antigen presentation pathway by inducing a replacement of catalytic proteasome subunits with immunoproteasome subunits. In turn, increases the quantity, quality, and repertoire of peptides for class I MHC loading. Increases the efficiency of peptide generation also by inducing the expression of activator PA28 that associates with the proteasome and alters its proteolytic cleavage preference. Up-regulates as well MHC II complexes on the cell surface by promoting expression of several key molecules such as cathepsins B/CTSB, H/CTSH, and L/CTSL. Participates in the regulation of hematopoietic stem cells during development and under homeostatic conditions by affecting their development, quiescence, and differentiation. This is Interferon gamma (IFNG) from Felis catus (Cat).